The sequence spans 855 residues: Inactive rhomboid protein 1 (855 aa).

The segment at 1–36 (MSEARRDSTSSLQRKKPPWLKLDIPSAVPPTAEEPS) is disordered. Residues 1-411 (MSEARRDSTS…HRPFFTYWLT (411 aa)) lie on the Cytoplasmic side of the membrane. Phosphoserine is present on residues Ser-76 and Ser-176. Residues Thr-180 and Thr-183 each carry the phosphothreonine modification. Ser-390 is modified (phosphoserine). The chain crosses the membrane as a helical span at residues 412–432 (FVHSLVTILAVCIYGIAPVGF). Over 433–655 (SQHETVDSVL…NPEVPDQFYR (223 aa)) the chain is Lumenal. Asn-583 carries an N-linked (GlcNAc...) asparagine glycan. The chain crosses the membrane as a helical span at residues 656–676 (LWLSLFLHAGILHCLVSICFQ). Residues 677 to 691 (MTVLRDLEKLAGWHR) lie on the Cytoplasmic side of the membrane. Residues 692-712 (IAIIYLLSGVTGNLASAIFLP) traverse the membrane as a helical segment. Topologically, residues 713–714 (YR) are lumenal. A helical transmembrane segment spans residues 715-735 (AEVGPAGSQFGILACLFVELF). Residues 736–746 (QSWQILARPWR) lie on the Cytoplasmic side of the membrane. A helical membrane pass occupies residues 747 to 767 (AFFKLLAVVLFLFTFGLLPWI). The Lumenal portion of the chain corresponds to 768–772 (DNFAH). The chain crosses the membrane as a helical span at residues 773-793 (ISGFISGLFLSFAFLPYISFG). The Cytoplasmic portion of the chain corresponds to 794-803 (KFDLYRKRCQ). The chain crosses the membrane as a helical span at residues 804–824 (IIIFQVVFLGLLAGLVVLFYF). Residues 825-855 (YPVRCEWCEFLTCIPFTDKFCEKYELDAQLH) lie on the Lumenal side of the membrane.

It belongs to the peptidase S54 family. In terms of assembly, homodimer, or homooligomer. Interacts with TGFA and HBEGF. Interacts with EGF; may retain EGF in the endoplasmic reticulum and regulates its degradation through the endoplasmic reticulum-associated degradation (ERAD). Interacts (via cytoplasmic N-terminus) with FRMD8/iTAP; this interaction leads to mutual protein stabilization. Interacts with ADAM17/TACE.

The protein resides in the endoplasmic reticulum membrane. The protein localises to the golgi apparatus membrane. In terms of biological role, regulates ADAM17 protease, a sheddase of the epidermal growth factor (EGF) receptor ligands and TNF, thereby plays a role in sleep, cell survival, proliferation, migration and inflammation. Does not exhibit any protease activity on its own. This Papio anubis (Olive baboon) protein is Inactive rhomboid protein 1 (RHBDF1).